Consider the following 364-residue polypeptide: F-box/kelch-repeat protein At3g23880 (364 aa).

Residues 8-54 (MFSPHNLPLEMMEEILLRLPVKSLTRFKCVCSSWRSLISETLFALKH) enclose the F-box domain. Kelch repeat units lie at residues 169 to 215 (DYKV…SRSG) and 216 to 265 (IYIN…TLGD).

This is F-box/kelch-repeat protein At3g23880 from Arabidopsis thaliana (Mouse-ear cress).